We begin with the raw amino-acid sequence, 532 residues long: Muscarinic acetylcholine receptor M5 (532 aa).

Topologically, residues 1–29 (MEGESYHNETTVNGTPVNHQALERHGLWE) are extracellular. Asparagine 8 carries an N-linked (GlcNAc...) asparagine glycan. Residues 30–53 (VITIAAVTAVVSLMTIVGNVLVMI) traverse the membrane as a helical segment. At 54-66 (SFKVNSQLKTVNN) the chain is on the cytoplasmic side. Residues 67 to 87 (YYLLSLACADLIIGIFSMNLY) traverse the membrane as a helical segment. Over 88–104 (TTYILMGRWVLGSLACD) the chain is Extracellular. A disulfide bridge links cysteine 103 with cysteine 183. Residues 105 to 126 (LWLALDYVASNASVMNLLVISF) form a helical membrane-spanning segment. Residues 127–146 (DRYFSITRPLTYRAKRTPKR) lie on the Cytoplasmic side of the membrane. The chain crosses the membrane as a helical span at residues 147-169 (AGIMIGLAWLVSFILWAPAILCW). Topologically, residues 170–191 (QYLVGKRTVPPDECQIQFLSEP) are extracellular. The helical transmembrane segment at 192–214 (TITFGTAIAAFYIPVSVMTILYC) threads the bilayer. Residues 215–443 (RIYRETEKRT…LVKERKAAQT (229 aa)) lie on the Cytoplasmic side of the membrane. A disordered region spans residues 265 to 290 (VRNQASWSSSRRSTSTTGKPTQATDL). Positions 270–281 (SWSSSRRSTSTT) are enriched in low complexity. A helical membrane pass occupies residues 444–464 (LSAILLAFIITWTPYNIMVLV). The Extracellular segment spans residues 465–478 (STFCDKCVPVTLWH). Residues 479 to 498 (LGYWLCYVNSTINPICYALC) traverse the membrane as a helical segment. Over 499-532 (NRTFRKTFKLLLLCRWKKKKVEEKLYWQGNSKLP) the chain is Cytoplasmic. Threonine 501 and threonine 505 each carry phosphothreonine.

Belongs to the G-protein coupled receptor 1 family. Muscarinic acetylcholine receptor subfamily. CHRM5 sub-subfamily.

It is found in the cell membrane. The protein resides in the postsynaptic cell membrane. Its function is as follows. The muscarinic acetylcholine receptor mediates various cellular responses, including inhibition of adenylate cyclase, breakdown of phosphoinositides and modulation of potassium channels through the action of G proteins. Primary transducing effect is Pi turnover. This Mus musculus (Mouse) protein is Muscarinic acetylcholine receptor M5 (Chrm5).